Reading from the N-terminus, the 218-residue chain is Octanoyltransferase (218 aa).

Residues glutamate 31–glutamine 206 enclose the BPL/LPL catalytic domain. Residues arginine 70–histidine 77, serine 137–glycine 139, and glycine 150–alanine 152 each bind substrate. Catalysis depends on cysteine 168, which acts as the Acyl-thioester intermediate.

It belongs to the LipB family.

It localises to the cytoplasm. It catalyses the reaction octanoyl-[ACP] + L-lysyl-[protein] = N(6)-octanoyl-L-lysyl-[protein] + holo-[ACP] + H(+). Its pathway is protein modification; protein lipoylation via endogenous pathway; protein N(6)-(lipoyl)lysine from octanoyl-[acyl-carrier-protein]: step 1/2. Catalyzes the transfer of endogenously produced octanoic acid from octanoyl-acyl-carrier-protein onto the lipoyl domains of lipoate-dependent enzymes. Lipoyl-ACP can also act as a substrate although octanoyl-ACP is likely to be the physiological substrate. The chain is Octanoyltransferase from Vibrio vulnificus (strain YJ016).